The following is a 1231-amino-acid chain: Protein FAM193A (1231 aa).

Residues Cys-106 to Tyr-142 are a coiled coil. The disordered stretch occupies residues Asp-249–Ile-272. The span at Ser-258–Ser-270 shows a compositional bias: low complexity. Ser-293 carries the post-translational modification Phosphoserine. Disordered stretches follow at residues Asn-331–Gln-405, Gln-633–Phe-703, Ser-719–Glu-789, Leu-826–Gly-845, and Asn-860–Asp-1174. The segment covering Glu-355–Ser-365 has biased composition (acidic residues). Ser-648 carries the post-translational modification Phosphoserine. Positions Leu-676–Ser-691 are enriched in low complexity. Residues Gln-761 to Ser-773 show a composition bias toward acidic residues. Over residues Glu-776–Thr-785 the composition is skewed to low complexity. A compositionally biased stretch (basic residues) spans Ala-872–Arg-881. Residues Arg-877 to Asn-973 are a coiled coil. Over residues Lys-882 to Glu-909 the composition is skewed to basic and acidic residues. Residues Glu-910 to Glu-920 are compositionally biased toward acidic residues. Positions Gln-921 to Lys-935 are enriched in basic and acidic residues. Basic residues predominate over residues Arg-937–Arg-946. Over residues Gln-962 to Leu-979 the composition is skewed to polar residues. Residues Ser-1136 and Ser-1151 each carry the phosphoserine modification. The span at Gly-1156–Gly-1166 shows a compositional bias: basic residues.

The protein belongs to the FAM193 family.

The sequence is that of Protein FAM193A (Fam193a) from Mus musculus (Mouse).